Reading from the N-terminus, the 401-residue chain is Exodeoxyribonuclease 7 large subunit (401 aa).

Belongs to the XseA family. Heterooligomer composed of large and small subunits.

Its subcellular location is the cytoplasm. The catalysed reaction is Exonucleolytic cleavage in either 5'- to 3'- or 3'- to 5'-direction to yield nucleoside 5'-phosphates.. Its function is as follows. Bidirectionally degrades single-stranded DNA into large acid-insoluble oligonucleotides, which are then degraded further into small acid-soluble oligonucleotides. In Thermoanaerobacter sp. (strain X514), this protein is Exodeoxyribonuclease 7 large subunit.